A 109-amino-acid chain; its full sequence is Large ribosomal subunit protein eL30 (109 aa).

This sequence belongs to the eukaryotic ribosomal protein eL30 family.

In Methanopyrus kandleri (strain AV19 / DSM 6324 / JCM 9639 / NBRC 100938), this protein is Large ribosomal subunit protein eL30.